Here is a 40-residue protein sequence, read N- to C-terminus: Toxin CSTX-17 (40 aa).

Cystine bridges form between C2-C17, C9-C22, C16-C33, and C24-C31. W40 carries the tryptophan amide modification.

Contains 4 disulfide bonds. As to expression, expressed by the venom gland.

It is found in the secreted. The sequence is that of Toxin CSTX-17 from Cupiennius salei (American wandering spider).